Consider the following 591-residue polypeptide: Phenylalanine--tRNA ligase beta subunit (591 aa).

A B5 domain is found at L304–T380. Residues D358, D364, E367, and D368 each contribute to the Mg(2+) site.

The protein belongs to the phenylalanyl-tRNA synthetase beta subunit family. Type 2 subfamily. In terms of assembly, tetramer of two alpha and two beta subunits. It depends on Mg(2+) as a cofactor.

The protein localises to the cytoplasm. The enzyme catalyses tRNA(Phe) + L-phenylalanine + ATP = L-phenylalanyl-tRNA(Phe) + AMP + diphosphate + H(+). The polypeptide is Phenylalanine--tRNA ligase beta subunit (Caenorhabditis elegans).